The sequence spans 502 residues: Acetyl-coenzyme A carboxylase carboxyl transferase subunit beta, chloroplastic (502 aa).

Positions 191 to 202 are enriched in low complexity; sequence GSDSESSSIRTS. Residues 191-212 are disordered; it reads GSDSESSSIRTSGNDSNFNVRE. Positions 226–497 constitute a CoA carboxyltransferase N-terminal domain; the sequence is LWVQCENCYE…NQNSSGARGS (272 aa). Cys-230, Cys-233, Cys-249, and Cys-252 together coordinate Zn(2+). The C4-type zinc finger occupies 230 to 252; it reads CENCYELNYRSFFRSKMNICEQC.

It belongs to the AccD/PCCB family. In terms of assembly, acetyl-CoA carboxylase is a heterohexamer composed of biotin carboxyl carrier protein, biotin carboxylase and 2 subunits each of ACCase subunit alpha and ACCase plastid-coded subunit beta (accD). The cofactor is Zn(2+).

It localises to the plastid. The protein resides in the chloroplast stroma. The enzyme catalyses N(6)-carboxybiotinyl-L-lysyl-[protein] + acetyl-CoA = N(6)-biotinyl-L-lysyl-[protein] + malonyl-CoA. It functions in the pathway lipid metabolism; malonyl-CoA biosynthesis; malonyl-CoA from acetyl-CoA: step 1/1. Functionally, component of the acetyl coenzyme A carboxylase (ACC) complex. Biotin carboxylase (BC) catalyzes the carboxylation of biotin on its carrier protein (BCCP) and then the CO(2) group is transferred by the transcarboxylase to acetyl-CoA to form malonyl-CoA. The sequence is that of Acetyl-coenzyme A carboxylase carboxyl transferase subunit beta, chloroplastic from Chloranthus spicatus (Chulantree).